The following is a 243-amino-acid chain: Probable transcriptional regulatory protein BAV2207 (243 aa).

The interval Met1–Arg21 is disordered.

Belongs to the TACO1 family.

It is found in the cytoplasm. The sequence is that of Probable transcriptional regulatory protein BAV2207 from Bordetella avium (strain 197N).